Here is a 384-residue protein sequence, read N- to C-terminus: Potassium channel subfamily K member 18 (384 aa).

Residues 1 to 23 (MEVSGHPQARRCCPEALGKLFPG) are Cytoplasmic-facing. Residues 24 to 44 (LCFLCFLVTYALVGAVVFSAI) form a helical membrane-spanning segment. N-linked (GlcNAc...) asparagine glycosylation occurs at N70. Residues 103–129 (FLSSLFFCCTVFSTVGYGYIYPVTRLG) constitute an intramembrane region (pore-forming). K(+)-binding residues include T116, V117, G118, and Y119. The selectivity filter 1 stretch occupies residues 116-121 (TVGYGY). A helical membrane pass occupies residues 130–148 (KYLCMLYALFGIPLMFLVL). At 149–280 (TDTGDILATI…EVGQQVERLD (132 aa)) the chain is on the cytoplasmic side. Positions 200–205 (PQIIIS) are interaction with calcineurin. Residues 249–254 (RSNSCP) are interaction with YWHAH. 2 positions are modified to phosphoserine: S252 and S264. Residues 281 to 301 (IPLPIIALIVFAYISCAAAIL) traverse the membrane as a helical segment. Residues 314 to 328 (FYFCFVTLTTIGFGD) constitute an intramembrane region (pore-forming). A selectivity filter 2 region spans residues 323–328 (TIGFGD). The helical transmembrane segment at 335-355 (NFFLFFSIYIIVGMEIVFIAF) threads the bilayer. Residues 356-384 (KLVQNRLIDIYKNVMLFFAKGKFYHLVKK) are Cytoplasmic-facing.

This sequence belongs to the two pore domain potassium channel (TC 1.A.1.8) family. As to quaternary structure, homodimer. Heterodimer with KCNK2. Heterodimer with KCNK10. Interacts with calcineurin. Interacts with YWHAH, in a phosphorylation-dependent manner. Post-translationally, N-glycosylated. Phosphorylation of Ser-264 is required for the binding of 14-3-3eta/YWHAH. Calcineurin-mediated dephosphorylation enhances channel activity. In terms of tissue distribution, expressed in dorsal root ganglion and trigeminal ganglion neurons. Detected at low levels in spinal cord. Expressed in regulatory T cells (at protein level).

Its subcellular location is the cell membrane. The catalysed reaction is K(+)(in) = K(+)(out). Its activity is regulated as follows. Activated by volatile anesthetics but inhibited by amide local anesthetics. Inhibited by Ba(2+) ions. Inhibited by free polyunsaturated fatty acids. Channel conductance is sensitive to intracellular pH, it decreases at acidic pH and increases at basic pH. In contrast to its mouse ortholog, it is not regulated by extracellular protons. Insensitive to changes in temperature. In terms of biological role, k(+) channel that conducts outward and inward rectifying currents at depolarized and hyperpolarized membrane potentials, respectively. The outward rectifying currents are voltage-dependent, coupled to K(+) electrochemical gradient across the membrane, whereas the inward currents can be induced in response to activation of Ca(2+)-mobilizing receptors. Homo- and heterodimerizes to form functional channels with distinct regulatory and gating properties. In trigeminal ganglia sensory neurons, the heterodimers of KCNK18/TRESK and KCNK2/TREK-1 or KCNK10/TREK-2 inhibit neuronal firing and neurogenic inflammation by stabilizing the resting membrane potential at K(+) equilibrium potential as well as by regulating the threshold of action potentials and the spike frequency. In thymocytes, conducts K(+) currents upon T cell receptor (TCR) signaling leading to sustained Ca(2+) influx and NF-kappa-B activation, FOXP3 transcription and positive selection of regulatory T cell (Treg) progenitor subsets. Appears to mediate the analgesics effects of hydroxy-alpha-sanshool, a metabolite naturally present in Schezuan pepper and other Xanthoxylum plants. The protein is Potassium channel subfamily K member 18 of Homo sapiens (Human).